The primary structure comprises 54 residues: Large ribosomal subunit protein bL33 (54 aa).

This sequence belongs to the bacterial ribosomal protein bL33 family.

This chain is Large ribosomal subunit protein bL33, found in Stenotrophomonas maltophilia (strain K279a).